We begin with the raw amino-acid sequence, 567 residues long: MAQRIFTLILLLCSTSAFAGLFDAPGRSQFVPADRAFVFDFQQNQHDLTLSWQVKEGYYLYRKQISITPTKADIAAVQLPAGVWHEDEFYGKSEIYRKRLNVPVTVNQAAAGATLTVTYQGCADAGFCYPPETKTVPLSEVAAAIDATPTPAVTQTGETSKPAAQLPFSALWALLIGIGIAFTPCVLPMYPLISGIVLGGRQRLSTGRALLLAFIYVQGMALTYTALGLVAAAAGLQFQAALQHPYVLIGLAIVFTLLALSMFGLFTLQLPSSLQTRLTLMSNRQQGGSPGGVFVMGAIAGLICSPCTTAPLSAILLYIAQSGNMWLGGGTLYLYALGMGLPLMLVTVFGNRLLPKSGPWMAHVKTAFGFVILALPVFLLERIIGEAWGLRLWSLLGVAFFGWAFITSLQARRAGMRIVQIILLAAALISVRPLQDWAFGSPSAQAPAHLNFTAISTVDELNQALAQAKGNPVMLDFYADWCVACKEFEKYTFSDPRVQQALGDTVLLQANVTANNAQDVALLKHLQVLGLPTILFFDAQGQEQPQARVTGFMDAATFSAHLHDRQP.

The N-terminal stretch at 1 to 19 (MAQRIFTLILLLCSTSAFA) is a signal peptide. Disulfide bonds link cysteine 122/cysteine 128 and cysteine 185/cysteine 307. 8 helical membrane-spanning segments follow: residues 166–186 (LPFSALWALLIGIGIAFTPCV), 210–230 (LLLAFIYVQGMALTYTALGLV), 246–266 (YVLIGLAIVFTLLALSMFGLF), 299–319 (IAGLICSPCTTAPLSAILLYI), 326–346 (WLGGGTLYLYALGMGLPLMLV), 360–380 (WMAHVKTAFGFVILALPVFLL), 387–407 (AWGLRLWSLLGVAFFGWAFIT), and 418–438 (IVQIILLAAALISVRPLQDWA). Residues 435-567 (QDWAFGSPSA…FSAHLHDRQP (133 aa)) enclose the Thioredoxin domain. A disulfide bond links cysteine 482 and cysteine 485.

Belongs to the thioredoxin family. DsbD subfamily.

It is found in the cell inner membrane. It catalyses the reaction [protein]-dithiol + NAD(+) = [protein]-disulfide + NADH + H(+). It carries out the reaction [protein]-dithiol + NADP(+) = [protein]-disulfide + NADPH + H(+). Its function is as follows. Required to facilitate the formation of correct disulfide bonds in some periplasmic proteins and for the assembly of the periplasmic c-type cytochromes. Acts by transferring electrons from cytoplasmic thioredoxin to the periplasm. This transfer involves a cascade of disulfide bond formation and reduction steps. The protein is Thiol:disulfide interchange protein DsbD of Salmonella choleraesuis (strain SC-B67).